The primary structure comprises 568 residues: Proline--tRNA ligase (568 aa).

The protein belongs to the class-II aminoacyl-tRNA synthetase family. ProS type 1 subfamily. Homodimer.

It is found in the cytoplasm. The catalysed reaction is tRNA(Pro) + L-proline + ATP = L-prolyl-tRNA(Pro) + AMP + diphosphate. Its function is as follows. Catalyzes the attachment of proline to tRNA(Pro) in a two-step reaction: proline is first activated by ATP to form Pro-AMP and then transferred to the acceptor end of tRNA(Pro). As ProRS can inadvertently accommodate and process non-cognate amino acids such as alanine and cysteine, to avoid such errors it has two additional distinct editing activities against alanine. One activity is designated as 'pretransfer' editing and involves the tRNA(Pro)-independent hydrolysis of activated Ala-AMP. The other activity is designated 'posttransfer' editing and involves deacylation of mischarged Ala-tRNA(Pro). The misacylated Cys-tRNA(Pro) is not edited by ProRS. The chain is Proline--tRNA ligase from Listeria monocytogenes serovar 1/2a (strain ATCC BAA-679 / EGD-e).